We begin with the raw amino-acid sequence, 182 residues long: Gas vesicle protein H1 (182 aa).

Positions 1-11 are enriched in acidic residues; sequence MVPDENDDASD. Disordered stretches follow at residues 1–21 and 65–106; these read MVPD…SGLL and GRAD…GGTS. The span at 12–21 shows a compositional bias: low complexity; it reads DQSSQLSGLL. Residues 92–101 are compositionally biased toward basic and acidic residues; that stretch reads TTEDSIHVET.

The protein belongs to the gas vesicle GvpH family. GvpF to GvpM interact with each other in vitro, and may form multi-subunit complex(es). Interacts with GvpC1. Might interact with GvpA1.

The protein localises to the cytoplasm. It is found in the gas vesicle. Proteins GvpF to GvpM might be involved in nucleating gas vesicle formation. May be important for the stability of gas vesicles. Gas vesicles are hollow, gas filled proteinaceous nanostructures found in several microbial planktonic microorganisms. They allow positioning of halobacteria at the optimal depth for growth in the poorly aerated, shallow brine pools of their habitat. Its function is as follows. Expression of a 9.5 kb p-vac DNA fragment containing 2 divergently transcribed regions (gvpD-gvpE-gvpF-gvpG-gvpH-gvpI-gvpJ-gvpK-gvpL-gvpM and gvpA-gvpC-gvpN-gvpO) allows H.volcanii to produce gas vesicles. A similar region restores gas vesicle production in H.halobium without the p-vac locus, but it still has the c-vac locus. The chain is Gas vesicle protein H1 (gvpH11) from Halobacterium salinarum (strain ATCC 700922 / JCM 11081 / NRC-1) (Halobacterium halobium).